A 135-amino-acid polypeptide reads, in one-letter code: Ribosome-binding factor A (135 aa).

This sequence belongs to the RbfA family. Monomer. Binds 30S ribosomal subunits, but not 50S ribosomal subunits or 70S ribosomes.

It is found in the cytoplasm. Functionally, one of several proteins that assist in the late maturation steps of the functional core of the 30S ribosomal subunit. Associates with free 30S ribosomal subunits (but not with 30S subunits that are part of 70S ribosomes or polysomes). Required for efficient processing of 16S rRNA. May interact with the 5'-terminal helix region of 16S rRNA. The chain is Ribosome-binding factor A from Rhodopseudomonas palustris (strain HaA2).